Here is a 105-residue protein sequence, read N- to C-terminus: MTSSDGSDLTTLVNVGRSVARYFERIGITEIAQLRDRDPVELYERMSAAFGQRLDPCLLDTVMSAVDQAEGLPARPWWHYTPERKRLLAGEGHDRAGGTAGEGTA.

Involved in mitomycin resistance. May operate with McrA or may be a type of transcriptional activator protein. The protein is Mitomycin resistance protein McrB (mcrB) of Streptomyces lavendulae.